The primary structure comprises 513 residues: ATP synthase subunit alpha (513 aa).

Residue 169–176 participates in ATP binding; sequence GDRQTGKT.

The protein belongs to the ATPase alpha/beta chains family. F-type ATPases have 2 components, CF(1) - the catalytic core - and CF(0) - the membrane proton channel. CF(1) has five subunits: alpha(3), beta(3), gamma(1), delta(1), epsilon(1). CF(0) has three main subunits: a(1), b(2) and c(9-12). The alpha and beta chains form an alternating ring which encloses part of the gamma chain. CF(1) is attached to CF(0) by a central stalk formed by the gamma and epsilon chains, while a peripheral stalk is formed by the delta and b chains.

Its subcellular location is the cell inner membrane. It carries out the reaction ATP + H2O + 4 H(+)(in) = ADP + phosphate + 5 H(+)(out). In terms of biological role, produces ATP from ADP in the presence of a proton gradient across the membrane. The alpha chain is a regulatory subunit. The sequence is that of ATP synthase subunit alpha from Cupriavidus pinatubonensis (strain JMP 134 / LMG 1197) (Cupriavidus necator (strain JMP 134)).